The sequence spans 144 residues: MAFSSLLSRSSYIPMDFIIARCRARSTKQKTYAPVCQASTTISSRCSLVGMMQRSPSRSSASSINTMYSAIIPHSVVINLKHANSRSRSSSAVLRASPVCGLTISSTDRIARCTLTCVARSGQMYQISSMPFARRLNRYPDTTS.

This is Protein D (D) from Escherichia coli.